The chain runs to 879 residues: Phosphoenolpyruvate carboxylase (879 aa).

Active-site residues include H138 and K546.

The protein belongs to the PEPCase type 1 family. It depends on Mg(2+) as a cofactor.

It catalyses the reaction oxaloacetate + phosphate = phosphoenolpyruvate + hydrogencarbonate. Its function is as follows. Forms oxaloacetate, a four-carbon dicarboxylic acid source for the tricarboxylic acid cycle. In Pectobacterium carotovorum subsp. carotovorum (strain PC1), this protein is Phosphoenolpyruvate carboxylase.